The chain runs to 249 residues: Aquaporin SIP2-1 (249 aa).

The next 2 helical transmembrane spans lie at 12-32 (PWLV…GALV) and 53-73 (VSLS…SGGA). The NPA 1 signature appears at 76–78 (NPL). Transmembrane regions (helical) follow at residues 104-124 (AQVI…PNVG), 133-155 (AHHG…VTLK), 176-196 (IHLL…AFAW), and 210-230 (LVYW…VTFF). Residues 189-191 (NPA) carry the NPA 2 motif.

It belongs to the MIP/aquaporin (TC 1.A.8) family. SIP (TC 1.A.8.10) subfamily.

It is found in the membrane. Aquaporins facilitate the transport of water and small neutral solutes across cell membranes. This is Aquaporin SIP2-1 (SIP2-1) from Zea mays (Maize).